The following is a 297-amino-acid chain: N-acetylmuramic acid 6-phosphate etherase (297 aa).

Residues 55-218 (AAAALKSGGR…STGAMVKFGK (164 aa)) form the SIS domain. The active-site Proton donor is E83. E114 is an active-site residue.

Belongs to the GCKR-like family. MurNAc-6-P etherase subfamily. Homodimer.

It carries out the reaction N-acetyl-D-muramate 6-phosphate + H2O = N-acetyl-D-glucosamine 6-phosphate + (R)-lactate. Its pathway is amino-sugar metabolism; 1,6-anhydro-N-acetylmuramate degradation. It functions in the pathway amino-sugar metabolism; N-acetylmuramate degradation. It participates in cell wall biogenesis; peptidoglycan recycling. Its function is as follows. Specifically catalyzes the cleavage of the D-lactyl ether substituent of MurNAc 6-phosphate, producing GlcNAc 6-phosphate and D-lactate. Together with AnmK, is also required for the utilization of anhydro-N-acetylmuramic acid (anhMurNAc) either imported from the medium or derived from its own cell wall murein, and thus plays a role in cell wall recycling. This is N-acetylmuramic acid 6-phosphate etherase from Salmonella paratyphi A (strain ATCC 9150 / SARB42).